Reading from the N-terminus, the 243-residue chain is Small ribosomal subunit protein uS2c (243 aa).

The segment at 224–243 (GNNGKVSSDQEDTQELQTVQ) is disordered.

It belongs to the universal ribosomal protein uS2 family.

Its subcellular location is the plastid. The protein localises to the chloroplast. The protein is Small ribosomal subunit protein uS2c (rps2) of Rhodomonas salina (Cryptomonas salina).